A 428-amino-acid chain; its full sequence is Cytochrome P450-terp (428 aa).

Position 377 (Cys-377) interacts with heme.

Belongs to the cytochrome P450 family. Heme is required as a cofactor.

The protein resides in the cytoplasm. Functionally, catalyzes the hydroxylation of alpha-terpineol. This is Cytochrome P450-terp (cyp108) from Pseudomonas sp.